The chain runs to 513 residues: Maturase K (513 aa).

The protein belongs to the intron maturase 2 family. MatK subfamily.

The protein resides in the plastid. The protein localises to the chloroplast. Its function is as follows. Usually encoded in the trnK tRNA gene intron. Probably assists in splicing its own and other chloroplast group II introns. This Sporobolus indicus (Smut grass) protein is Maturase K.